Reading from the N-terminus, the 795-residue chain is uncharacterized protein (795 aa).

Positions 228-280 (NIICFKNKCKNNEKEKKEEEEDHDHDHDDKKKEKEDKEKEEEEEEEDSNDDFE) form a coiled coil. 4 disordered regions span residues 242–278 (EKKE…SNDD), 326–430 (TTTT…TPNR), 455–484 (INQQ…KSEP), and 673–743 (NNNN…NENE). The span at 251-264 (DHDHDDKKKEKEDK) shows a compositional bias: basic and acidic residues. Residues 265-278 (EKEEEEEEEDSNDD) show a composition bias toward acidic residues. Low complexity predominate over residues 326-345 (TTTTTVNGSKNSSNTTTPIT). The span at 362-373 (DDDDDDDLTDED) shows a compositional bias: acidic residues. Residues 377–398 (HNEIYSTSPKVSHSTFCQSSPT) are compositionally biased toward polar residues. Composition is skewed to low complexity over residues 399–414 (LLDL…QQQQ), 455–480 (INQQ…SSNI), and 673–729 (NNNN…NQNE). Residues 732-743 (NENKNENENENE) show a composition bias toward basic and acidic residues.

This is an uncharacterized protein from Dictyostelium discoideum (Social amoeba).